The following is a 1216-amino-acid chain: ATP-dependent helicase/nuclease subunit A (1216 aa).

The UvrD-like helicase ATP-binding domain occupies 26–488 (QKKTAEQIEA…ILLKENFRSS (463 aa)). 47–54 (ASAGSGKT) serves as a coordination point for ATP. Positions 515–802 (KHQLVFANTK…ELMTIHKSKG (288 aa)) constitute a UvrD-like helicase C-terminal domain.

This sequence belongs to the helicase family. AddA subfamily. As to quaternary structure, heterodimer of AddA and AddB/RexB. Mg(2+) is required as a cofactor.

It catalyses the reaction Couples ATP hydrolysis with the unwinding of duplex DNA by translocating in the 3'-5' direction.. The enzyme catalyses ATP + H2O = ADP + phosphate + H(+). The heterodimer acts as both an ATP-dependent DNA helicase and an ATP-dependent, dual-direction single-stranded exonuclease. Recognizes the chi site generating a DNA molecule suitable for the initiation of homologous recombination. The AddA nuclease domain is required for chi fragment generation; this subunit has the helicase and 3' -&gt; 5' nuclease activities. This chain is ATP-dependent helicase/nuclease subunit A, found in Streptococcus pneumoniae (strain Hungary19A-6).